The primary structure comprises 354 residues: UDP-2,3-diacetamido-2,3-dideoxy-D-glucuronate 2-epimerase (354 aa).

This sequence belongs to the UDP-N-acetylglucosamine 2-epimerase family.

It carries out the reaction UDP-2,3-diacetamido-2,3-dideoxy-alpha-D-glucuronate = UDP-2,3-diacetamido-2,3-dideoxy-alpha-D-mannuronate. It participates in bacterial outer membrane biogenesis; LPS O-antigen biosynthesis. In terms of biological role, plays a role in the biosynthesis of B-band O antigen for serotype O5. Catalyzes the epimerization of UDP-2,3-diacetamido-2,3-dideoxy-alpha-D-glucuronic acid (UDP-alpha-D-GlcNAc3NAcA) to UDP-2,3-diacetamido-2,3-dideoxy-alpha-D-mannuronic acid (UDP-alpha-D-ManNAc3NAcA). Exhibits high specificity towards the substrate as UDP-alpha-D-GlcNAc, UDP-alpha-D-GlcNAcA (UDP-2-acetamido-2-deoxy-alpha-D-glucuronic acid) and UDP-alpha-D-GlcNAc3NAc (UDP-2,3-diacetamido-2,3-dideoxy-alpha-D-glucose) cannot act as substrates. The sequence is that of UDP-2,3-diacetamido-2,3-dideoxy-D-glucuronate 2-epimerase from Pseudomonas aeruginosa (strain ATCC 15692 / DSM 22644 / CIP 104116 / JCM 14847 / LMG 12228 / 1C / PRS 101 / PAO1).